The following is a 402-amino-acid chain: Dynactin subunit 2 (402 aa).

The tract at residues 1–24 (MADPKYADLPGIARNEPDVYETSD) is disordered. Ala2 carries the N-acetylalanine modification. Tyr6 carries the phosphotyrosine modification. Residue Ser83 is modified to Phosphoserine. Tyr86 bears the Phosphotyrosine mark. A coiled-coil region spans residues 100 to 130 (QQKYQRLLHEVQELTTEVEKIKTTVKESATE). 2 positions are modified to phosphothreonine: Thr134 and Thr199. Residues 185–205 (KSSKGSSGGKSTGGTPPDSSL) are disordered. The stretch at 215–247 (EQDKFSQAAKVAELEKRLTELEATVRCDQDAQN) forms a coiled coil. Ser321 carries the post-translational modification Phosphoserine.

This sequence belongs to the dynactin subunit 2 family. Subunit of dynactin, a multiprotein complex part of a tripartite complex with dynein and a adapter, such as BICDL1, BICD2 or HOOK3. The dynactin complex is built around ACTR1A/ACTB filament and consists of an actin-related filament composed of a shoulder domain, a pointed end and a barbed end. Its length is defined by its flexible shoulder domain. The soulder is composed of 2 DCTN1 subunits, 4 DCTN2 and 2 DCTN3. The 4 DCNT2 (via N-terminus) bind the ACTR1A filament and act as molecular rulers to determine the length. The pointed end is important for binding dynein-dynactin cargo adapters and consists of 4 subunits: ACTR10, DCNT4, DCTN5 and DCTN6. The barbed end is composed of a CAPZA1:CAPZB heterodimers, which binds ACTR1A/ACTB filament and dynactin and stabilizes dynactin. Interacts with BICD2 and CEP135. Interacts with DYNAP. Interacts with ECPAS. Interacts with MAPRE1.

It localises to the cytoplasm. The protein localises to the cytoskeleton. It is found in the microtubule organizing center. The protein resides in the centrosome. Its subcellular location is the membrane. Functionally, part of the dynactin complex that activates the molecular motor dynein for ultra-processive transport along microtubules. In the dynactin soulder domain, binds the ACTR1A filament and acts as a molecular ruler to determine the length. Modulates cytoplasmic dynein binding to an organelle, and plays a role in prometaphase chromosome alignment and spindle organization during mitosis. Involved in anchoring microtubules to centrosomes. May play a role in synapse formation during brain development. This chain is Dynactin subunit 2 (Dctn2), found in Rattus norvegicus (Rat).